The following is a 379-amino-acid chain: MDTAWFIGFMVVIGAVIGGATNSLAIKMLFRPYTEKRIGKWRVPFTPGLIPKRHQELAIQLGHMVVHYLLTAEGLGKKLKSAVFMKAMNDWLSTELLKLLRSELTIGELLEDKLGVKEPKQTLLQKTEGLIEKSYDRFFQENRYKQIGEVLPRGVNEKIDHSVPVIAAFLLERGQALFSSEEGKERLSKMIDRFLLNKGTLGNMISMFLGNERLVDKLQPELMKFMRDDGTKRMVEEILEKEWAKLKQKDVALIEDQLNKEDIVEYMTTALEKNVTFYQWVDQPLCDWSEPFEDMLVINWVPKLVDAVSDLLALHLEGLLEKLNLEDIVREQVEAFSVERLEELVLTISKREFKMITYLGALLGGMIGFIQGLLVLFIG.

Helical transmembrane passes span 6 to 26 (FIGF…SLAI) and 359 to 379 (LGAL…LFIG).

This sequence belongs to the UPF0754 family.

The protein localises to the cell membrane. The sequence is that of UPF0754 protein BpOF4_11355 from Alkalihalophilus pseudofirmus (strain ATCC BAA-2126 / JCM 17055 / OF4) (Bacillus pseudofirmus).